We begin with the raw amino-acid sequence, 320 residues long: Short-chain dehydrogenase/reductase ATR7 (320 aa).

Residues serine 32, isoleucine 34, glutamine 55, aspartate 70, asparagine 93, lysine 134, tyrosine 167, lysine 171, and threonine 202 each contribute to the NADP(+) site. Catalysis depends on tyrosine 167, which acts as the Proton acceptor. Residue lysine 171 is the Lowers pKa of active site Tyr of the active site.

The protein belongs to the short-chain dehydrogenases/reductases (SDR) family.

Its pathway is mycotoxin biosynthesis. In terms of biological role, short-chain dehydrogenase/reductase; part of the core atranone cluster (CAC) which products are predicted to catalyze most or all steps of mycotoxin atranone synthesis, starting from geranylgeranyl pyrophosphate (GGPP). The initial cyclization of GGPP to dolabellane is probably performed by the terpene cyclase ATR13. The Baeyer-Villiger oxidation near the end of the atranone synthesis, which converts atranones D and E to atranones F and G is predicted to be catalyzed by the monooxygenase ATR8. Of the CAC's other predicted gene products, the reducing PKS ATR6 might synthesize a polyketide chain. This polyketide is probably transferred onto the atranone backbone by the polyketide transferase ATR5. Other predicted CAC products include 4 oxygenases (ATR2, ATR3, ATR4, and ATR14), 3 short-chain reductases (ATR7, ATR9, and ATR10), and a methyltransferase (ATR12). These may all be involved in the various steps of atranone biosynthesis, although their specific roles must await experimental determination. This is Short-chain dehydrogenase/reductase ATR7 from Stachybotrys chlorohalonatus (strain IBT 40285).